A 631-amino-acid polypeptide reads, in one-letter code: Glutamyl-tRNA(Gln) amidotransferase subunit E (631 aa).

This sequence belongs to the GatB/GatE family. GatE subfamily. Heterodimer of GatD and GatE.

The catalysed reaction is L-glutamyl-tRNA(Gln) + L-glutamine + ATP + H2O = L-glutaminyl-tRNA(Gln) + L-glutamate + ADP + phosphate + H(+). Its function is as follows. Allows the formation of correctly charged Gln-tRNA(Gln) through the transamidation of misacylated Glu-tRNA(Gln) in organisms which lack glutaminyl-tRNA synthetase. The reaction takes place in the presence of glutamine and ATP through an activated gamma-phospho-Glu-tRNA(Gln). The GatDE system is specific for glutamate and does not act on aspartate. The chain is Glutamyl-tRNA(Gln) amidotransferase subunit E from Methanococcus maripaludis (strain C7 / ATCC BAA-1331).